A 262-amino-acid polypeptide reads, in one-letter code: Trypsin eta (262 aa).

The signal sequence occupies residues 1-22 (MNKVILRILAVLFLLGIYAVSA). The propeptide at 23–27 (QSDGR) is activation peptide. The Peptidase S1 domain occupies 28 to 259 (IVGGADTSSY…YKDWIAKQRT (232 aa)). An intrachain disulfide couples Cys59 to Cys75. Catalysis depends on charge relay system residues His74 and Asp120. 2 disulfide bridges follow: Cys185-Cys200 and Cys211-Cys235. Residue Ser215 is the Charge relay system of the active site.

The protein belongs to the peptidase S1 family.

The protein localises to the secreted. It is found in the extracellular space. It catalyses the reaction Preferential cleavage: Arg-|-Xaa, Lys-|-Xaa.. In Drosophila melanogaster (Fruit fly), this protein is Trypsin eta (etaTry).